Reading from the N-terminus, the 442-residue chain is Chromosomal replication initiator protein DnaA (442 aa).

A domain I, interacts with DnaA modulators region spans residues 1-75 (MDAWPRCLER…GNGEVALAVG (75 aa)). The tract at residues 75-104 (GSRPRAPEPLPAPQAVASAPAAAPIVPFAG) is domain II. Residues 105-322 (NLDSHYTFAN…GALNTLVARA (218 aa)) form a domain III, AAA+ region region. Residues Gly-150, Gly-152, Lys-153, and Thr-154 each contribute to the ATP site. Positions 323–442 (NFTGRSITVE…WEKLIRKLSE (120 aa)) are domain IV, binds dsDNA.

Belongs to the DnaA family. As to quaternary structure, oligomerizes as a right-handed, spiral filament on DNA at oriC.

The protein localises to the cytoplasm. Functionally, plays an essential role in the initiation and regulation of chromosomal replication. ATP-DnaA binds to the origin of replication (oriC) to initiate formation of the DNA replication initiation complex once per cell cycle. Binds the DnaA box (a 9 base pair repeat at the origin) and separates the double-stranded (ds)DNA. Forms a right-handed helical filament on oriC DNA; dsDNA binds to the exterior of the filament while single-stranded (ss)DNA is stabiized in the filament's interior. The ATP-DnaA-oriC complex binds and stabilizes one strand of the AT-rich DNA unwinding element (DUE), permitting loading of DNA polymerase. After initiation quickly degrades to an ADP-DnaA complex that is not apt for DNA replication. Binds acidic phospholipids. The protein is Chromosomal replication initiator protein DnaA of Xanthomonas campestris pv. campestris (strain B100).